A 197-amino-acid polypeptide reads, in one-letter code: Imidazoleglycerol-phosphate dehydratase (197 aa).

The protein belongs to the imidazoleglycerol-phosphate dehydratase family.

It localises to the cytoplasm. The enzyme catalyses D-erythro-1-(imidazol-4-yl)glycerol 3-phosphate = 3-(imidazol-4-yl)-2-oxopropyl phosphate + H2O. It participates in amino-acid biosynthesis; L-histidine biosynthesis; L-histidine from 5-phospho-alpha-D-ribose 1-diphosphate: step 6/9. This Rhodopseudomonas palustris (strain TIE-1) protein is Imidazoleglycerol-phosphate dehydratase.